The following is a 418-amino-acid chain: UDP-N-acetylglucosamine 1-carboxyvinyltransferase (418 aa).

22-23 (KN) lines the phosphoenolpyruvate pocket. Residue Arg92 participates in UDP-N-acetyl-alpha-D-glucosamine binding. The active-site Proton donor is Cys116. Position 116 is a 2-(S-cysteinyl)pyruvic acid O-phosphothioketal (Cys116). UDP-N-acetyl-alpha-D-glucosamine contacts are provided by Asp306 and Ile328.

The protein belongs to the EPSP synthase family. MurA subfamily.

Its subcellular location is the cytoplasm. It catalyses the reaction phosphoenolpyruvate + UDP-N-acetyl-alpha-D-glucosamine = UDP-N-acetyl-3-O-(1-carboxyvinyl)-alpha-D-glucosamine + phosphate. It functions in the pathway cell wall biogenesis; peptidoglycan biosynthesis. Its function is as follows. Cell wall formation. Adds enolpyruvyl to UDP-N-acetylglucosamine. The polypeptide is UDP-N-acetylglucosamine 1-carboxyvinyltransferase (Solibacter usitatus (strain Ellin6076)).